The chain runs to 443 residues: KH domain-containing, RNA-binding, signal transduction-associated protein 1 (443 aa).

The segment at Met-1–Lys-96 is disordered. The span at Arg-10–Met-21 shows a compositional bias: low complexity. Ser-18, Ser-20, and Ser-29 each carry phosphoserine. Thr-33 is subject to Phosphothreonine. Arg-45 is subject to Asymmetric dimethylarginine; by PRMT1. Arg-52 is subject to Asymmetric dimethylarginine; partial; by PRMT1. A Phosphoserine modification is found at Ser-58. Thr-84 is modified (phosphothreonine; by MAPK1). Residues Lys-96 and Lys-102 each participate in a glycyl lysine isopeptide (Lys-Gly) (interchain with G-Cter in SUMO2) cross-link. The tract at residues Glu-100–Met-260 is involved in homodimerization. The residue at position 113 (Ser-113) is a Phosphoserine. Lys-139 participates in a covalent cross-link: Glycyl lysine isopeptide (Lys-Gly) (interchain with G-Cter in SUMO2). A Phosphoserine modification is found at Ser-150. Positions Asn-171–Val-197 constitute a KH domain. Lys-175 is modified (N6-acetyllysine; alternate). Lys-175 participates in a covalent cross-link: Glycyl lysine isopeptide (Lys-Gly) (interchain with G-Cter in SUMO2); alternate. Residue Thr-183 is modified to Phosphothreonine. The segment covering Pro-280–Ala-293 has biased composition (low complexity). The tract at residues Pro-280–Gly-316 is disordered. 3 positions are modified to omega-N-methylarginine: Arg-282, Arg-284, and Arg-291. At Arg-304 the chain carries Asymmetric dimethylarginine; by PRMT1. Residues Gly-307–Gly-316 are compositionally biased toward low complexity. 4 positions are modified to omega-N-methylarginine; by PRMT1: Arg-310, Arg-315, Arg-320, and Arg-325. Arg-320 bears the Dimethylated arginine; in A2780 ovarian carcinoma cell line mark. Residues Ala-327–Arg-346 are disordered. Dimethylated arginine; in A2780 ovarian carcinoma cell line occurs at positions 331 and 340. Arg-331 is subject to Asymmetric dimethylarginine; alternate. Arg-331 carries the post-translational modification Omega-N-methylarginine; by PRMT1; alternate. At Arg-340 the chain carries Omega-N-methylarginine; by PRMT1. The segment at Gly-351–Tyr-443 is interaction with HNRNPA1. Tyr-387 carries the post-translational modification Phosphotyrosine. Ser-390 is modified (phosphoserine). An interaction with ZBTB7A region spans residues Gly-400–Arg-420. A disordered region spans residues Tyr-411–Tyr-443. Lys-432 is covalently cross-linked (Glycyl lysine isopeptide (Lys-Gly) (interchain with G-Cter in SUMO2)). Positions Ala-434 to Tyr-443 are enriched in basic and acidic residues. Phosphotyrosine; by PTK6 is present on residues Tyr-435, Tyr-440, and Tyr-443.

The protein belongs to the KHDRBS family. In terms of assembly, self-associates to form homooligomers when bound to RNA, oligomerization appears to be limited when binding to proteins; dimerization increases RNA affinity. Forms a trimeric complex in the nucleus consisting of BANP, HDAC6 and KHDRBS1/SAM68; HDAC6 keeps KHDRBS1 in a deacetylated state which inhibits the inclusion of CD44 alternate exons. The complex is disrupted by MAPK1/MAPK3-mediated phosphorylation of BANP which results in BANP export to the cytoplasm. This facilitates acetylation of KHDRBS1 and CD44 variant exon inclusion. Interacts with KHDRBS3/SLIM-2. Interacts with KHDRBS2/SLIM-1; heterooligomer formation of KHDRBS family proteins may modulate RNA substrate specificity. Interacts with RASA1, LCK, FYN, PTPN6, PLCG1, GRB2, CBL, JAK3, PIK3R, STAT3, APC, HNRNPA1. Interacts with PTK6 (via SH3 and SH2 domains). Forms a complex with ILF2, ILF3, YLPM1, RBMX, NCOA5 and PPP1CA. Does not interact with TPR. Interacts with PRMT1. Binds WBP4/FBP21 (via WW domains), FNBP4/FBP30 (via WW domains). Interacts (via Arg/Gly-rich-flanked Pro-rich regions) with FYN (via the SH3 domain). Interacts with the non-receptor tyrosine kinase SRMS; the interaction leads to phosphorylation of KHDRBS1. Interacts with ZBTB7A; negatively regulates KHDRBS1 splicing activity toward BCL2L1. Post-translationally, tyrosine phosphorylated by several non-receptor tyrosine kinases including LCK, FYN and JAK3. Also tyrosine phosphorylated by the non-receptor tyrosine kinase SRMS in an EGF-dependent manner. Negatively correlates with ability to bind RNA but required for many interactions with proteins. Phosphorylation by PTK6 negatively regulates its RNA binding ability. Phosphorylation by PTK6 at Tyr-440 dictates the nuclear localization of KHDRBS1. Phosphorylation at Tyr-387 disrupts interaction with APC. Phosphorylation at tyrosine residues by FYN inverts activity on modulation of BCL2L1 alternative splicing. Acetylated. Positively correlates with ability to bind RNA. Deacetylated by HDAC6; this regulates alternative splicing by inhibiting the inclusion of CD44 alternate exons. In terms of processing, arginine methylation is required for nuclear localization. Also can affect interaction with other proteins. Inhibits interaction with Src-like SH3 domains, but not interaction with WW domains of WBP4/FBP21 and FNBP4/FBP30. Ubiquitously expressed in all tissue examined. Isoform 1 is expressed at lower levels in brain, skeletal muscle, and liver whereas isoform 3 is intensified in skeletal muscle and in liver.

Its subcellular location is the nucleus. The protein resides in the cytoplasm. It is found in the membrane. In terms of biological role, recruited and tyrosine phosphorylated by several receptor systems, for example the T-cell, leptin and insulin receptors. Once phosphorylated, functions as an adapter protein in signal transduction cascades by binding to SH2 and SH3 domain-containing proteins. Role in G2-M progression in the cell cycle. Represses CBP-dependent transcriptional activation apparently by competing with other nuclear factors for binding to CBP. Also acts as a putative regulator of mRNA stability and/or translation rates and mediates mRNA nuclear export. Positively regulates the association of constitutive transport element (CTE)-containing mRNA with large polyribosomes and translation initiation. According to some authors, is not involved in the nucleocytoplasmic export of unspliced (CTE)-containing RNA species according to. RNA-binding protein that plays a role in the regulation of alternative splicing and influences mRNA splice site selection and exon inclusion. Binds to RNA containing 5'-[AU]UAA-3' as a bipartite motif spaced by more than 15 nucleotides. Binds poly(A). Can regulate CD44 alternative splicing in a Ras pathway-dependent manner. In cooperation with HNRNPA1 modulates alternative splicing of BCL2L1 by promoting splicing toward isoform Bcl-X(S), and of SMN1. Can regulate alternative splicing of NRXN1 and NRXN3 in the laminin G-like domain 6 containing the evolutionary conserved neurexin alternative spliced segment 4 (AS4) involved in neurexin selective targeting to postsynaptic partners. In a neuronal activity-dependent manner cooperates synergistically with KHDRBS2/SLIM-1 in regulation of NRXN1 exon skipping at AS4. The cooperation with KHDRBS2/SLIM-1 is antagonistic for regulation of NXRN3 alternative splicing at AS4. Isoform 3, which is expressed in growth-arrested cells only, inhibits S phase. In Homo sapiens (Human), this protein is KH domain-containing, RNA-binding, signal transduction-associated protein 1.